The primary structure comprises 457 residues: Heme sensor protein HssS (457 aa).

Helical transmembrane passes span 9 to 29 (IAIYSITVILFSALISFVLTN) and 164 to 184 (TFLAVLLMLLLFISISLVIAS). The 53-residue stretch at 186–238 (YSIIRPVKKLKLATERLIDGDFETPIKQTRKDEIGTLQYHFNKMRESLGQVDQ) folds into the HAMP domain. Positions 246–456 (NVSHEIKTPL…TFTITLPNNS (211 aa)) constitute a Histidine kinase domain. Position 249 is a phosphohistidine; by autocatalysis (His249).

Autophosphorylated.

The protein resides in the cell membrane. The enzyme catalyses ATP + protein L-histidine = ADP + protein N-phospho-L-histidine.. Functionally, member of the two-component regulatory system HssS/HssR involved in intracellular heme homeostasis and tempering of staphylococcal virulence. HssS functions as a heme sensor histidine kinase which is autophosphorylated at a histidine residue and transfers its phosphate group to an aspartate residue of HssR. HssR/HssS activates the expression of hrtAB, an efflux pump, in response to extracellular heme, hemin, hemoglobin or blood. This is Heme sensor protein HssS (hssS) from Staphylococcus aureus (strain USA300).